A 337-amino-acid polypeptide reads, in one-letter code: Methylthioribose-1-phosphate isomerase (337 aa).

Substrate-binding positions include 51 to 53 (RGA), arginine 88, and glutamine 187. Catalysis depends on aspartate 228, which acts as the Proton donor. 238-239 (NK) contributes to the substrate binding site.

The protein belongs to the eIF-2B alpha/beta/delta subunits family. MtnA subfamily.

It catalyses the reaction 5-(methylsulfanyl)-alpha-D-ribose 1-phosphate = 5-(methylsulfanyl)-D-ribulose 1-phosphate. It participates in amino-acid biosynthesis; L-methionine biosynthesis via salvage pathway; L-methionine from S-methyl-5-thio-alpha-D-ribose 1-phosphate: step 1/6. Its function is as follows. Catalyzes the interconversion of methylthioribose-1-phosphate (MTR-1-P) into methylthioribulose-1-phosphate (MTRu-1-P). The chain is Methylthioribose-1-phosphate isomerase from Anaeromyxobacter sp. (strain Fw109-5).